The following is a 718-amino-acid chain: Polyribonucleotide nucleotidyltransferase (718 aa).

Positions 493 and 499 each coordinate Mg(2+). Residues 560–619 (PRMITIKINPEKIRDVIGKGGSVIRALTEETGTTIDISDDGVVTIASTSSEGMAEAKKRI) enclose the KH domain. The 69-residue stretch at 629-697 (GQVYEGTVLK…EKGRVRLSAK (69 aa)) folds into the S1 motif domain.

This sequence belongs to the polyribonucleotide nucleotidyltransferase family. Requires Mg(2+) as cofactor.

It localises to the cytoplasm. It carries out the reaction RNA(n+1) + phosphate = RNA(n) + a ribonucleoside 5'-diphosphate. Its function is as follows. Involved in mRNA degradation. Catalyzes the phosphorolysis of single-stranded polyribonucleotides processively in the 3'- to 5'-direction. The protein is Polyribonucleotide nucleotidyltransferase of Paraburkholderia phytofirmans (strain DSM 17436 / LMG 22146 / PsJN) (Burkholderia phytofirmans).